The primary structure comprises 351 residues: Beta-hexosaminidase (351 aa).

Residues Asp62, Arg70, Arg134, and 164-165 each bind substrate; that span reads KH. His177 acts as the Proton donor/acceptor in catalysis. Asp249 (nucleophile) is an active-site residue.

This sequence belongs to the glycosyl hydrolase 3 family. NagZ subfamily.

Its subcellular location is the cytoplasm. It catalyses the reaction Hydrolysis of terminal non-reducing N-acetyl-D-hexosamine residues in N-acetyl-beta-D-hexosaminides.. The protein operates within cell wall biogenesis; peptidoglycan recycling. Functionally, plays a role in peptidoglycan recycling by cleaving the terminal beta-1,4-linked N-acetylglucosamine (GlcNAc) from peptide-linked peptidoglycan fragments, giving rise to free GlcNAc, anhydro-N-acetylmuramic acid and anhydro-N-acetylmuramic acid-linked peptides. In Histophilus somni (strain 129Pt) (Haemophilus somnus), this protein is Beta-hexosaminidase.